We begin with the raw amino-acid sequence, 477 residues long: Sucrose-6-phosphate hydrolase (477 aa).

Residues 36-39 (WMND), Q55, W63, 98-99 (FS), 160-161 (RD), E215, and W298 contribute to the substrate site. Residue D39 is part of the active site.

This sequence belongs to the glycosyl hydrolase 32 family.

It localises to the cytoplasm. It catalyses the reaction Hydrolysis of terminal non-reducing beta-D-fructofuranoside residues in beta-D-fructofuranosides.. It functions in the pathway glycan biosynthesis; sucrose metabolism. In terms of biological role, enables the bacterium to metabolize sucrose as a sole carbon source. The protein is Sucrose-6-phosphate hydrolase (cscA) of Escherichia coli.